The primary structure comprises 360 residues: NAD(P)H-quinone oxidoreductase subunit 1, chloroplastic (360 aa).

8 helical membrane passes run 30–50 (FLPI…LVWL), 98–118 (FSIG…VIPF), 127–147 (FNIG…GLLM), 165–185 (AAQS…ISLL), 203–223 (FWGW…ISSL), 253–273 (FGLF…FVTV), 297–317 (IFGT…FLFI), and 340–360 (FLLP…VFSL).

Belongs to the complex I subunit 1 family. As to quaternary structure, NDH is composed of at least 16 different subunits, 5 of which are encoded in the nucleus.

The protein resides in the plastid. It localises to the chloroplast thylakoid membrane. The enzyme catalyses a plastoquinone + NADH + (n+1) H(+)(in) = a plastoquinol + NAD(+) + n H(+)(out). It catalyses the reaction a plastoquinone + NADPH + (n+1) H(+)(in) = a plastoquinol + NADP(+) + n H(+)(out). In terms of biological role, NDH shuttles electrons from NAD(P)H:plastoquinone, via FMN and iron-sulfur (Fe-S) centers, to quinones in the photosynthetic chain and possibly in a chloroplast respiratory chain. The immediate electron acceptor for the enzyme in this species is believed to be plastoquinone. Couples the redox reaction to proton translocation, and thus conserves the redox energy in a proton gradient. The sequence is that of NAD(P)H-quinone oxidoreductase subunit 1, chloroplastic from Aethionema cordifolium (Lebanon stonecress).